The sequence spans 398 residues: Phospholipase C (398 aa).

The first 28 residues, 1-28 (MKRKIYKLLICATIATSLWAVRTTKVYA), serve as a signal peptide directing secretion. Positions 29, 39, 84, 96, 154, 158, 164, 176, and 180 each coordinate Zn(2+). One can recognise a Zn-dependent PLC domain in the interval 29 to 278 (WDGKADGTGT…HDVSDGKDSS (250 aa)). Residues 275–283 (KDSSANKNV) form a linker region. In terms of domain architecture, PLAT spans 284 to 398 (NELVAYITTG…ISGNSTYNIK (115 aa)). Positions 299, 300, 301, 321, 322, 324, 325, 326, and 365 each coordinate Ca(2+).

Ca(2+) serves as cofactor. Requires Zn(2+) as cofactor.

Its subcellular location is the secreted. The catalysed reaction is a 1,2-diacyl-sn-glycero-3-phosphocholine + H2O = phosphocholine + a 1,2-diacyl-sn-glycerol + H(+). Functionally, bacterial hemolysins are exotoxins that attack blood cell membranes and cause cell rupture. Constitutes an essential virulence factor in gas gangrene. Binds to eukaryotic membranes where it hydrolyzes both phosphatidylcholine and sphingomyelin, causing cell rupture. The diacylglycerol produced can activate both the arachidonic acid pathway, leading to modulation of the inflammatory response cascade and thrombosis, and protein kinase C, leading to activation of eukaryotic phospholipases and further membrane damage. The sequence is that of Phospholipase C (plc) from Clostridium perfringens.